We begin with the raw amino-acid sequence, 86 residues long: Co-chaperonin GroES (86 aa).

This sequence belongs to the GroES chaperonin family. As to quaternary structure, heptamer of 7 subunits arranged in a ring. Interacts with the chaperonin GroEL.

Its subcellular location is the cytoplasm. Its function is as follows. Together with the chaperonin GroEL, plays an essential role in assisting protein folding. The GroEL-GroES system forms a nano-cage that allows encapsulation of the non-native substrate proteins and provides a physical environment optimized to promote and accelerate protein folding. GroES binds to the apical surface of the GroEL ring, thereby capping the opening of the GroEL channel. The sequence is that of Co-chaperonin GroES from Campylobacter curvus (strain 525.92).